The chain runs to 65 residues: Large ribosomal subunit protein bL35 (65 aa).

Disordered stretches follow at residues 1–23 and 29–48; these read MPKI…GKVK and GSHI…RQSH. A compositionally biased stretch (basic residues) spans 33–43; sequence LAKKSRKRKRD.

It belongs to the bacterial ribosomal protein bL35 family.

In Desulfatibacillum aliphaticivorans, this protein is Large ribosomal subunit protein bL35.